A 263-amino-acid chain; its full sequence is Ribosomal RNA small subunit methyltransferase J (263 aa).

Residues 115 to 116, 131 to 132, and aspartate 181 each bind S-adenosyl-L-methionine; these read RD and ER.

It belongs to the methyltransferase superfamily. RsmJ family.

It localises to the cytoplasm. The catalysed reaction is guanosine(1516) in 16S rRNA + S-adenosyl-L-methionine = N(2)-methylguanosine(1516) in 16S rRNA + S-adenosyl-L-homocysteine + H(+). In terms of biological role, specifically methylates the guanosine in position 1516 of 16S rRNA. This is Ribosomal RNA small subunit methyltransferase J from Hahella chejuensis (strain KCTC 2396).